The sequence spans 444 residues: CRAL-TRIO domain-containing protein C3H8.02 (444 aa).

The residue at position 40 (Ser-40) is a Phosphoserine. Thr-43 carries the post-translational modification Phosphothreonine. At Ser-81 the chain carries Phosphoserine. Residues 171–330 (DDDFVRQLRI…EFGGPNPWRY (160 aa)) form the CRAL-TRIO domain. Thr-418 carries the post-translational modification Phosphothreonine.

The chain is CRAL-TRIO domain-containing protein C3H8.02 from Schizosaccharomyces pombe (strain 972 / ATCC 24843) (Fission yeast).